A 727-amino-acid chain; its full sequence is Bromodomain-containing protein C631.02 (727 aa).

Disordered stretches follow at residues 27-231 (AATI…PPMT) and 341-369 (TSYSRPGRRPRSMTAPKGGARTRRQAAMY). The segment covering 56–68 (ENDDGTLDLFGDS) has biased composition (acidic residues). Residues 69–78 (ELEKEQKGDN) show a composition bias toward basic and acidic residues. Polar residues predominate over residues 102-114 (PSSPTHPSVSNIT). Positions 128–150 (EEEKSSESLDSHTHPPKRVRNED) are enriched in basic and acidic residues. Positions 153-177 (LTFSKTSPVSPSSLKDGASNTVTND) are enriched in polar residues. Ser-162 carries the post-translational modification Phosphoserine. Basic and acidic residues predominate over residues 206–231 (SKEHSSPHDETVKKEENDKDQYPPMT). Residues 229-335 (PMTKEQHKYI…ATFERQLKQL (107 aa)) enclose the Bromo 1 domain. The 110-residue stretch at 388 to 497 (RKDAAEMKFC…SIFQKLWANK (110 aa)) folds into the Bromo 2 domain. Positions 570 to 650 (RSLSVDIYPP…KGDEIGAEAL (81 aa)) constitute an NET domain. The interval 699 to 727 (IAAYNTKSLGSDDSSSEDDGESSESSDSA) is disordered. Acidic residues predominate over residues 712-727 (SSSEDDGESSESSDSA).

It belongs to the BET family.

It localises to the nucleus. The chain is Bromodomain-containing protein C631.02 from Schizosaccharomyces pombe (strain 972 / ATCC 24843) (Fission yeast).